Consider the following 884-residue polypeptide: MADTSVQKLAAEVGKSVERLIEQFSEAGLKKGQADTVSETEKQQLLDYLKKQHGADKAPTKMTLQRKTVSTLSVPAGGGQSKDVKVEVRKKRTFVKRDDSELVDQAELEAKAKAEADAKAAAEAKQKADAEAQAKAAAEAKAKAEANKAKEKAPQAPAPKPKAELKAETPEAAAARAEAERIKATQEAVLTKKQKEEAAQAAEEAKKLAEVNSKRWAEEERLRLEAEKNGDHHVTTSKVARAAEDSSDMDDEKRGRRARNKPTNKKRGGKDARDGREKHMRNRSTAPQSMAHGFNKPVAAVSRDVRIGETVSVAELAHLMAVKATEIIKQMMKMGSMVTINQILDQETAQMVAEEMGHKVVLLRENELEEQVLGDRDDNVKLETRAPVVTIMGHVDHGKTSLLDYIRRAKVAAGEAGGITQHIGAYHVETDNGMITFLDTPGHAAFTSMRARGAKATDIVILVVAADDGVMPQTIEAIQHAKAGNVPLIVAVNKMDKPDADPERVKSELSQHGVMSDDWGGDNMFVHLSAKTGEGVDELLEGILLQSEVLELKAVREGMAAGVVIESQLDKGRGPVATVLVQSGTLRQGDIVLCGLMYGKIRAMKDENGNAITEAGPSIPVEILGLSGVPSAGDEATVVRDERKAREVALYRQGKFRDVKLARQQKSKLENMFANMEEGEVQELNIVLKADVQGSLEAICDSLTGLSTAEVKVNIIARGVGALTETDATLAAASNAIMVGFNVRADAQARKTIEAESVDLRYYSIIYNLIDEVRAAMTGMLAPEFKQQIIGLAEVRDVFKSPKIGAIAGCMVTEGIVKRSAPIRVLRDNVVIYEGELESLRRFKDDATEVRNGMECGIGVKNYNDVRVGDQIEVFETIEVARTL.

Composition is skewed to basic and acidic residues over residues 110–153 and 193–234; these read AKAK…KEKA and KQKE…DHHV. Residues 110–291 are disordered; the sequence is AKAKAEADAK…NRSTAPQSMA (182 aa). A compositionally biased stretch (basic residues) spans 255-268; sequence GRRARNKPTNKKRG. Positions 384-553 constitute a tr-type G domain; it reads TRAPVVTIMG…LLQSEVLELK (170 aa). The segment at 393-400 is G1; sequence GHVDHGKT. 393–400 serves as a coordination point for GTP; the sequence is GHVDHGKT. The G2 stretch occupies residues 418-422; that stretch reads GITQH. Residues 439 to 442 form a G3 region; it reads DTPG. Residues 439–443 and 493–496 contribute to the GTP site; these read DTPGH and NKMD. The G4 stretch occupies residues 493–496; that stretch reads NKMD. The interval 529–531 is G5; it reads SAK.

It belongs to the TRAFAC class translation factor GTPase superfamily. Classic translation factor GTPase family. IF-2 subfamily.

It localises to the cytoplasm. Its function is as follows. One of the essential components for the initiation of protein synthesis. Protects formylmethionyl-tRNA from spontaneous hydrolysis and promotes its binding to the 30S ribosomal subunits. Also involved in the hydrolysis of GTP during the formation of the 70S ribosomal complex. The chain is Translation initiation factor IF-2 from Shewanella denitrificans (strain OS217 / ATCC BAA-1090 / DSM 15013).